Here is a 458-residue protein sequence, read N- to C-terminus: Argininosuccinate lyase (458 aa).

This sequence belongs to the lyase 1 family. Argininosuccinate lyase subfamily.

The protein resides in the cytoplasm. The catalysed reaction is 2-(N(omega)-L-arginino)succinate = fumarate + L-arginine. It participates in amino-acid biosynthesis; L-arginine biosynthesis; L-arginine from L-ornithine and carbamoyl phosphate: step 3/3. This chain is Argininosuccinate lyase, found in Salmonella typhimurium (strain LT2 / SGSC1412 / ATCC 700720).